The primary structure comprises 327 residues: MAWWKAWIEQEGVTVKSSSHFNPDPDAETLYKAMKGIGTNEQAIIDVLTKRSNTQRQQIAKSFKAQFGKDLTETLKSELSGKFERLIVALMYPPYRYEAKELHDAMKGLGTKEGVIIEILASRTKNQLREIMKAYEEDYGSSLEEDIQADTSGYLERILVCLLQGSRDDVSSFVDPALALQDAQDLYAAGEKIRGTDEMKFITILCTRSATHLLRVFEEYEKIANKSIEDSIKSETHGSLEEAMLTVVKCTQNLHSYFAERLYYAMKGAGTRDGTLIRNIVSRSEIDLNLIKCHFKKMYGKTLSSMIMEDTSGDYKNALLSLVGSDP.

Annexin repeat units lie at residues 21–92 (FNPD…ALMY), 93–164 (PPYR…CLLQ), 177–249 (ALAL…TVVK), and 253–324 (NLHS…SLVG). 4 residues coordinate Ca(2+): Met-266, Gly-268, Gly-270, and Asp-310.

The protein belongs to the annexin family.

The sequence is that of Annexin A8-like protein 1 from Homo sapiens (Human).